The chain runs to 369 residues: Choline kinase B2 (369 aa).

This sequence belongs to the choline/ethanolamine kinase family. Requires Mg(2+) as cofactor.

It catalyses the reaction choline + ATP = phosphocholine + ADP + H(+). Its pathway is phospholipid metabolism; phosphatidylcholine biosynthesis; phosphocholine from choline: step 1/1. Its function is as follows. Catalyzes the first step in phosphatidylcholine biosynthesis. Phosphorylates choline. The sequence is that of Choline kinase B2 (ckb-2) from Caenorhabditis elegans.